Here is a 259-residue protein sequence, read N- to C-terminus: MTVGSLPAPLVKPSAPRPLLPILVAAIALALPCSITAADDALAPQRADMVREIAAVAAAAAAQSGRHAIDPRVMAVMGQVPRHEFVPDAQKPHAYENRPLPIGHGQTISQPYIVALMTDLMMVKPGDTVLEIGTGSGYQAAVLTGLARAVYTIEIIEPLGRHACDRLKRLAYRQVACKVGDGYYGWDEHAPYDAIVVTAAASHVPPPLIRQLKPGGRMVIPVGAQFLTQYLLLVEKSEDGTVSTRQILPVRFVPLVGKH.

Serine 109 is a catalytic residue.

The protein belongs to the methyltransferase superfamily. L-isoaspartyl/D-aspartyl protein methyltransferase family.

It is found in the cytoplasm. The catalysed reaction is [protein]-L-isoaspartate + S-adenosyl-L-methionine = [protein]-L-isoaspartate alpha-methyl ester + S-adenosyl-L-homocysteine. In terms of biological role, catalyzes the methyl esterification of L-isoaspartyl residues in peptides and proteins that result from spontaneous decomposition of normal L-aspartyl and L-asparaginyl residues. It plays a role in the repair and/or degradation of damaged proteins. The chain is Protein-L-isoaspartate O-methyltransferase 1 from Cupriavidus necator (strain ATCC 17699 / DSM 428 / KCTC 22496 / NCIMB 10442 / H16 / Stanier 337) (Ralstonia eutropha).